Consider the following 132-residue polypeptide: Mediator of RNA polymerase II transcription subunit 11 (132 aa).

Belongs to the Mediator complex subunit 11 family. Component of the Mediator complex.

Its subcellular location is the nucleus. In terms of biological role, component of the Mediator complex, a coactivator involved in the regulated transcription of nearly all RNA polymerase II-dependent genes. Mediator functions as a bridge to convey information from gene-specific regulatory proteins to the basal RNA polymerase II transcription machinery. Mediator is recruited to promoters by direct interactions with regulatory proteins and serves as a scaffold for theQ9P086 assembly of a functional pre-initiation complex with RNA polymerase II and the general transcription factors. The polypeptide is Mediator of RNA polymerase II transcription subunit 11 (MED11) (Aedes aegypti (Yellowfever mosquito)).